A 230-amino-acid polypeptide reads, in one-letter code: Cytidylate kinase (230 aa).

12–20 (GPSGAGKGT) lines the ATP pocket.

Belongs to the cytidylate kinase family. Type 1 subfamily.

The protein resides in the cytoplasm. The catalysed reaction is CMP + ATP = CDP + ADP. The enzyme catalyses dCMP + ATP = dCDP + ADP. The polypeptide is Cytidylate kinase (Yersinia pseudotuberculosis serotype O:1b (strain IP 31758)).